The primary structure comprises 37 residues: Potassium channel toxin alpha-KTx 2.14 (37 aa).

3 disulfides stabilise this stretch: cysteine 7–cysteine 28, cysteine 13–cysteine 33, and cysteine 17–cysteine 35.

Belongs to the short scorpion toxin superfamily. Potassium channel inhibitor family. Alpha-KTx 02 subfamily. In terms of tissue distribution, expressed by the venom gland.

The protein localises to the secreted. Reversibly blocks hKv1.1/KCNA1 (50% inhibition of current at 1 uM). Seems not to be voltage-dependent. The protein is Potassium channel toxin alpha-KTx 2.14 of Heteroctenus garridoi (Cuban scorpion).